Here is a 194-residue protein sequence, read N- to C-terminus: Outer-membrane lipoprotein LolB (194 aa).

The N-terminal stretch at 1–18 (MKLLQHLTLIFCLLILTA) is a signal peptide. Cysteine 19 carries N-palmitoyl cysteine lipidation. The S-diacylglycerol cysteine moiety is linked to residue cysteine 19.

The protein belongs to the LolB family. Monomer.

It localises to the cell outer membrane. In terms of biological role, plays a critical role in the incorporation of lipoproteins in the outer membrane after they are released by the LolA protein. This chain is Outer-membrane lipoprotein LolB, found in Tolumonas auensis (strain DSM 9187 / NBRC 110442 / TA 4).